Reading from the N-terminus, the 210-residue chain is dTTP/UTP pyrophosphatase (210 aa).

A compositionally biased stretch (basic and acidic residues) spans 1–15; sequence MTHGDNRDGPGRETR. The disordered stretch occupies residues 1 to 22; it reads MTHGDNRDGPGRETRSSGPLVL. Aspartate 86 functions as the Proton acceptor in the catalytic mechanism.

Belongs to the Maf family. YhdE subfamily. A divalent metal cation is required as a cofactor.

It localises to the cytoplasm. It catalyses the reaction dTTP + H2O = dTMP + diphosphate + H(+). It carries out the reaction UTP + H2O = UMP + diphosphate + H(+). Functionally, nucleoside triphosphate pyrophosphatase that hydrolyzes dTTP and UTP. May have a dual role in cell division arrest and in preventing the incorporation of modified nucleotides into cellular nucleic acids. In Rhodospirillum rubrum (strain ATCC 11170 / ATH 1.1.1 / DSM 467 / LMG 4362 / NCIMB 8255 / S1), this protein is dTTP/UTP pyrophosphatase.